An 885-amino-acid polypeptide reads, in one-letter code: Conidiophore development regulator abaA (885 aa).

Polar residues predominate over residues 1–20 (MSSLFQPRPVLSSQRYSQSP). Residues 1-25 (MSSLFQPRPVLSSQRYSQSPDYVDT) form a disordered region. The TEA DNA-binding region spans 124-217 (QKDKGGVWRR…QVVKKFFEDL (94 aa)). 2 disordered regions span residues 502 to 539 (KEKRRKYADGDGKKELERAGSKRKRSEDEGDAASWTRR) and 817 to 885 (APGS…TAGW). 2 stretches are compositionally biased toward basic and acidic residues: residues 508–521 (YADGDGKKELERAG) and 831–840 (VESHAGDHHG).

The protein belongs to the TEC1 family.

The protein resides in the nucleus. In terms of biological role, brlA, abaA and wetA are pivotal regulators of conidiophore development and conidium maturation. They act individually and together to regulate their own expression and that of numerous other sporulation-specific genes. BrlA, abaA and wetA act together to positively regulate the expression of the Pks1 gene cluster that mediates the biosynthesis of an anthraquinone derivative pigment that contributes to conidial pigmentation that provides protection from UV radiation, heat and cold stress. The protein is Conidiophore development regulator abaA of Metarhizium robertsii (strain ARSEF 23 / ATCC MYA-3075) (Metarhizium anisopliae (strain ARSEF 23)).